The following is a 469-amino-acid chain: Ribonuclease Y (469 aa).

Residues 6 to 26 (VTLILVGVIIFLFISLFFYVI) form a helical membrane-spanning segment. Residues 149–209 (FSFTIKLENE…IRREKAKRTM (61 aa)) form the KH domain. In terms of domain architecture, HD spans 276–369 (VLLHCVEAAV…VKVVDKLSAS (94 aa)).

This sequence belongs to the RNase Y family.

It is found in the cell membrane. Functionally, endoribonuclease that initiates mRNA decay. This Malacoplasma penetrans (strain HF-2) (Mycoplasma penetrans) protein is Ribonuclease Y.